Here is a 99-residue protein sequence, read N- to C-terminus: Defensin-A4 (99 aa).

An N-terminal signal peptide occupies residues 1–21 (MKTLCLLFAVLCLVTWTQARG). Positions 22 to 68 (AEVEENLTAQDGEVDIAGDNGDVQLTLNTDDFESFTLKTLTLGHPRV) are excised as a propeptide. 3 cysteine pairs are disulfide-bonded: Cys73–Cys97, Cys75–Cys89, and Cys79–Cys96.

It belongs to the alpha-defensin family. In terms of tissue distribution, lowly expressed in spleen, and expressed at lower levels in kidney and lung.

It localises to the secreted. Functionally, has antimicrobial activity. This Ornithorhynchus anatinus (Duckbill platypus) protein is Defensin-A4.